A 198-amino-acid polypeptide reads, in one-letter code: Holliday junction branch migration complex subunit RuvA (198 aa).

Residues 1 to 63 (MYDYIKGQLT…EDAHLLFGFH (63 aa)) form a domain I region. The tract at residues 64 to 142 (TEDEKDVFLK…EAPQETGNTK (79 aa)) is domain II. The interval 143-147 (ARSNK) is flexible linker. Positions 148–198 (AGNTQLDEAIEALLALGYKATELKKIRAFFEGTSETAEQYIKSALKLLMKG) are domain III.

It belongs to the RuvA family. In terms of assembly, homotetramer. Forms an RuvA(8)-RuvB(12)-Holliday junction (HJ) complex. HJ DNA is sandwiched between 2 RuvA tetramers; dsDNA enters through RuvA and exits via RuvB. An RuvB hexamer assembles on each DNA strand where it exits the tetramer. Each RuvB hexamer is contacted by two RuvA subunits (via domain III) on 2 adjacent RuvB subunits; this complex drives branch migration. In the full resolvosome a probable DNA-RuvA(4)-RuvB(12)-RuvC(2) complex forms which resolves the HJ.

The protein localises to the cytoplasm. The RuvA-RuvB-RuvC complex processes Holliday junction (HJ) DNA during genetic recombination and DNA repair, while the RuvA-RuvB complex plays an important role in the rescue of blocked DNA replication forks via replication fork reversal (RFR). RuvA specifically binds to HJ cruciform DNA, conferring on it an open structure. The RuvB hexamer acts as an ATP-dependent pump, pulling dsDNA into and through the RuvAB complex. HJ branch migration allows RuvC to scan DNA until it finds its consensus sequence, where it cleaves and resolves the cruciform DNA. This chain is Holliday junction branch migration complex subunit RuvA, found in Streptococcus pyogenes serotype M12 (strain MGAS2096).